We begin with the raw amino-acid sequence, 1045 residues long: Pre-mRNA-splicing factor ATP-dependent RNA helicase DHX16 (1045 aa).

The tract at residues 101 to 211 (EDSEESSEEA…ERSDKKAYEE (111 aa)) is disordered. 3 positions are modified to phosphoserine: Ser-103, Ser-106, and Ser-107. A compositionally biased stretch (basic residues) spans 119–131 (QKKRKKRKHLRKK). The segment covering 135–144 (EEEEEEEEEV) has biased composition (acidic residues). Ser-164 is subject to Phosphoserine. Basic and acidic residues predominate over residues 170–211 (RTERERLQDLEERDAFAERVRQRDKDRTRNVLERSDKKAYEE). The Helicase ATP-binding domain occupies 413-577 (LAAVANHQIL…FDDAPVFRIP (165 aa)). Residue 426–433 (GETGSGKT) participates in ATP binding. The DEAH box motif lies at 524 to 527 (DEAH). The 174-residue stretch at 602–775 (SVLQIHVTQP…NVVLLLKSLG (174 aa)) folds into the Helicase C-terminal domain. The residue at position 716 (Thr-716) is a Phosphothreonine. A disordered region spans residues 1026 to 1045 (EDPHAKKMPKKTGKTREELG).

This sequence belongs to the DEAD box helicase family. DEAH subfamily. DDX16/PRP8 sub-subfamily. Component of pre-catalytic spliceosome complexes. Component of the minor spliceosome, which splices U12-type introns. Interacts with GPKOW. Interacts with TRIM6. Interacts with RIGI.

Its subcellular location is the nucleus. The protein localises to the nucleoplasm. It is found in the cytoplasm. The catalysed reaction is ATP + H2O = ADP + phosphate + H(+). Required for pre-mRNA splicing as a component of the spliceosome. Contributes to pre-mRNA splicing after spliceosome formation and prior to the first transesterification reaction. As a component of the minor spliceosome, involved in the splicing of U12-type introns in pre-mRNAs. Also plays a role in innate antiviral response by acting as a pattern recognition receptor sensing splicing signals in viral RNA. Mechanistically, TRIM6 promotes the interaction between unanchored 'Lys-48'-polyubiquitin chains and DHX16, leading to DHX16 interaction with RIGI and ssRNA to amplify RIGI-dependent innate antiviral immune responses. In Sus scrofa (Pig), this protein is Pre-mRNA-splicing factor ATP-dependent RNA helicase DHX16 (DHX16).